The primary structure comprises 157 residues: MRIGHGYDVHRLVAGRKLIVGGVDIPHELGLLGHSDADVLLHAISDAILGALALGDIGKHFPDTDPRYKGADSRALLRHVMELATRKGFHLGNLDATIVAQRPKMAPHIPLMREHIAADLMADPDRVNVKATTTEELGFAGRGEGIAAYAVVLMEEK.

Residues Asp-8 and His-10 each coordinate a divalent metal cation. Residues 8–10 and 34–35 each bind 4-CDP-2-C-methyl-D-erythritol 2-phosphate; these read DVH and HS. His-42 serves as a coordination point for a divalent metal cation. 4-CDP-2-C-methyl-D-erythritol 2-phosphate-binding positions include 56–58, 61–65, 100–106, 132–135, Phe-139, and Arg-142; these read DIG, FPDTD, AQRPKMA, and TTTE.

This sequence belongs to the IspF family. As to quaternary structure, homotrimer. A divalent metal cation is required as a cofactor.

It carries out the reaction 4-CDP-2-C-methyl-D-erythritol 2-phosphate = 2-C-methyl-D-erythritol 2,4-cyclic diphosphate + CMP. It functions in the pathway isoprenoid biosynthesis; isopentenyl diphosphate biosynthesis via DXP pathway; isopentenyl diphosphate from 1-deoxy-D-xylulose 5-phosphate: step 4/6. In terms of biological role, involved in the biosynthesis of isopentenyl diphosphate (IPP) and dimethylallyl diphosphate (DMAPP), two major building blocks of isoprenoid compounds. Catalyzes the conversion of 4-diphosphocytidyl-2-C-methyl-D-erythritol 2-phosphate (CDP-ME2P) to 2-C-methyl-D-erythritol 2,4-cyclodiphosphate (ME-CPP) with a corresponding release of cytidine 5-monophosphate (CMP). The protein is 2-C-methyl-D-erythritol 2,4-cyclodiphosphate synthase of Geobacter sulfurreducens (strain ATCC 51573 / DSM 12127 / PCA).